Consider the following 182-residue polypeptide: Lipoprotein signal peptidase (182 aa).

The next 4 helical transmembrane spans lie at 15-35 (IYLG…FLVI), 44-64 (LEVF…FVFG), 65-85 (AFQD…VFLI), and 97-117 (PWGW…KFFV). Residues Asp-140 and Asp-162 contribute to the active site. Residues 155 to 175 (WPAFNVADSCVTIGLTILIFT) form a helical membrane-spanning segment.

The protein belongs to the peptidase A8 family.

It is found in the cell inner membrane. It carries out the reaction Release of signal peptides from bacterial membrane prolipoproteins. Hydrolyzes -Xaa-Yaa-Zaa-|-(S,diacylglyceryl)Cys-, in which Xaa is hydrophobic (preferably Leu), and Yaa (Ala or Ser) and Zaa (Gly or Ala) have small, neutral side chains.. The protein operates within protein modification; lipoprotein biosynthesis (signal peptide cleavage). Functionally, this protein specifically catalyzes the removal of signal peptides from prolipoproteins. The chain is Lipoprotein signal peptidase from Leptospira interrogans serogroup Icterohaemorrhagiae serovar Lai (strain 56601).